Reading from the N-terminus, the 327-residue chain is Phosphoenolpyruvate transferase (327 aa).

Position 59 (Asp-59) interacts with 7,8-didemethyl-8-hydroxy-5-deazariboflavin.

This sequence belongs to the CofD family. As to quaternary structure, homodimer. Mg(2+) serves as cofactor.

The enzyme catalyses enolpyruvoyl-2-diphospho-5'-guanosine + 7,8-didemethyl-8-hydroxy-5-deazariboflavin = dehydro coenzyme F420-0 + GMP + H(+). The protein operates within cofactor biosynthesis; coenzyme F420 biosynthesis. Its function is as follows. Catalyzes the transfer of the phosphoenolpyruvate moiety from enoylpyruvoyl-2-diphospho-5'-guanosine (EPPG) to 7,8-didemethyl-8-hydroxy-5-deazariboflavin (FO) with the formation of dehydro coenzyme F420-0 and GMP. The chain is Phosphoenolpyruvate transferase from Mycolicibacterium smegmatis (strain ATCC 700084 / mc(2)155) (Mycobacterium smegmatis).